The primary structure comprises 360 residues: Magnesium-protoporphyrin IX monomethyl ester [oxidative] cyclase (360 aa).

The protein belongs to the AcsF family. Fe cation serves as cofactor.

It carries out the reaction Mg-protoporphyrin IX 13-monomethyl ester + 3 NADPH + 3 O2 + 2 H(+) = 3,8-divinyl protochlorophyllide a + 3 NADP(+) + 5 H2O. It functions in the pathway porphyrin-containing compound metabolism; chlorophyll biosynthesis (light-independent). Catalyzes the formation of the isocyclic ring in chlorophyll biosynthesis. Mediates the cyclase reaction, which results in the formation of divinylprotochlorophyllide (Pchlide) characteristic of all chlorophylls from magnesium-protoporphyrin IX 13-monomethyl ester (MgPMME). The protein is Magnesium-protoporphyrin IX monomethyl ester [oxidative] cyclase of Synechococcus sp. (strain WH7803).